Here is a 917-residue protein sequence, read N- to C-terminus: DNA mismatch repair protein spellchecker 1 (917 aa).

Position 667-674 (667-674) interacts with ATP; sequence GPNMGGKS.

The protein belongs to the DNA mismatch repair MutS family. As to quaternary structure, heterodimer of Msh2/Spel and Msh6.

The protein resides in the nucleus. In terms of biological role, involved in postreplication mismatch repair. Binds specifically to DNA containing mismatched nucleotides thus providing a target for the excision repair processes characteristic of postreplication mismatch repair. This chain is DNA mismatch repair protein spellchecker 1 (spel1), found in Drosophila melanogaster (Fruit fly).